The chain runs to 392 residues: ATP phosphoribosyltransferase regulatory subunit (392 aa).

This sequence belongs to the class-II aminoacyl-tRNA synthetase family. HisZ subfamily. In terms of assembly, heteromultimer composed of HisG and HisZ subunits.

The protein localises to the cytoplasm. It participates in amino-acid biosynthesis; L-histidine biosynthesis; L-histidine from 5-phospho-alpha-D-ribose 1-diphosphate: step 1/9. Functionally, required for the first step of histidine biosynthesis. May allow the feedback regulation of ATP phosphoribosyltransferase activity by histidine. In Synechococcus sp. (strain WH7803), this protein is ATP phosphoribosyltransferase regulatory subunit.